A 365-amino-acid chain; its full sequence is Chloroplast protein FOR GROWTH AND FERTILITY 1 (365 aa).

Disordered stretches follow at residues M1 to L30 and Y62 to L90. The N-terminal 79 residues, M1–K79, are a transit peptide targeting the chloroplast. Composition is skewed to low complexity over residues P7 to S24 and Y62 to S77. Transmembrane regions (helical) follow at residues V109–F129, G139–P159, A182–L202, I218–P238, G274–P294, A301–I321, and L345–Y365.

In terms of tissue distribution, mostly expressed in leaves and flowers, to a lower extent, in stems, roots, floral bud, inflorescence and siliques, and, barely, in seedlings.

The protein resides in the plastid. It is found in the chloroplast membrane. The protein localises to the plastid membrane. Its function is as follows. Together with CGF2, essential protein which supports female gametogenesis and embryogenesis, probably by securing local energy supply. The chain is Chloroplast protein FOR GROWTH AND FERTILITY 1 from Arabidopsis thaliana (Mouse-ear cress).